A 179-amino-acid polypeptide reads, in one-letter code: Adenine phosphoribosyltransferase (179 aa).

It belongs to the purine/pyrimidine phosphoribosyltransferase family. As to quaternary structure, homodimer.

The protein resides in the cytoplasm. The catalysed reaction is AMP + diphosphate = 5-phospho-alpha-D-ribose 1-diphosphate + adenine. The protein operates within purine metabolism; AMP biosynthesis via salvage pathway; AMP from adenine: step 1/1. In terms of biological role, catalyzes a salvage reaction resulting in the formation of AMP, that is energically less costly than de novo synthesis. The chain is Adenine phosphoribosyltransferase from Nitrobacter hamburgensis (strain DSM 10229 / NCIMB 13809 / X14).